The primary structure comprises 251 residues: Cyclohexanol dehydrogenase (251 aa).

Aspartate 42, asparagine 95, tyrosine 161, lysine 165, isoleucine 194, and threonine 196 together coordinate NAD(+). Catalysis depends on tyrosine 161, which acts as the Proton acceptor.

Belongs to the short-chain dehydrogenases/reductases (SDR) family.

It carries out the reaction cyclohexanol + NAD(+) = cyclohexanone + NADH + H(+). Functionally, catalyzes the oxidation of cyclohexanol to cyclohexanone. Required for the conversion of cyclohexanol to adipic acid. The chain is Cyclohexanol dehydrogenase from Acinetobacter sp. (strain SE19).